Reading from the N-terminus, the 76-residue chain is DNA-directed RNA polymerase subunit omega (76 aa).

Belongs to the RNA polymerase subunit omega family. As to quaternary structure, in cyanobacteria the RNAP catalytic core is composed of 2 alpha, 1 beta, 1 beta', 1 gamma and 1 omega subunit. When a sigma factor is associated with the core the holoenzyme is formed, which can initiate transcription.

The catalysed reaction is RNA(n) + a ribonucleoside 5'-triphosphate = RNA(n+1) + diphosphate. In terms of biological role, promotes RNA polymerase assembly. Latches the N- and C-terminal regions of the beta' subunit thereby facilitating its interaction with the beta and alpha subunits. This chain is DNA-directed RNA polymerase subunit omega, found in Acaryochloris marina (strain MBIC 11017).